The sequence spans 753 residues: Protein-lysine N-methyltransferase SMYD4 (753 aa).

Arg112–Ala114 is an S-adenosyl-L-methionine binding site. The SET domain occupies Asp186–Gly528. The Zn(2+) site is built by Cys246, Cys249, Cys259, Cys262, Cys268, Cys272, His281, and Cys285. The MYND-type zinc finger occupies Cys246–Cys285. S-adenosyl-L-methionine is bound by residues Asn467 to His468 and Tyr527.

It belongs to the class V-like SAM-binding methyltransferase superfamily.

The protein localises to the nucleus. It localises to the cytoplasm. The catalysed reaction is L-lysyl-[protein] + S-adenosyl-L-methionine = N(6)-methyl-L-lysyl-[protein] + S-adenosyl-L-homocysteine + H(+). Protein-lysine N-methyltransferase. Monomethylates PRMT5, modulating its transcriptional activity. May also act as a histone methyltransferase. Plays a critical role in cardiac development. Acts as a key epigenetic regulator of gene expression during cardiac development via its dual activities as a methyltransferase and negative regulator of HDAC1. This Danio rerio (Zebrafish) protein is Protein-lysine N-methyltransferase SMYD4 (smyd4).